We begin with the raw amino-acid sequence, 92 residues long: Small ribosomal subunit protein uS19 (92 aa).

Belongs to the universal ribosomal protein uS19 family.

Protein S19 forms a complex with S13 that binds strongly to the 16S ribosomal RNA. This is Small ribosomal subunit protein uS19 from Bradyrhizobium sp. (strain BTAi1 / ATCC BAA-1182).